The primary structure comprises 229 residues: Non-structural protein P8 (229 aa).

2 consecutive transmembrane segments (helical) span residues Ile119–Leu139 and Ser162–Ala182.

This sequence belongs to the orbivirus NS3 family. Forms homooligomers via coiled-coil motif. Interacts with host OPTN; this interaction inhibits innate immune response.

It localises to the host cell membrane. The protein resides in the host Golgi apparatus. In terms of biological role, plays a role in the inhibition of host innate immune response. Interacts with host OPTN and thus inhibits the recruitment of TBK1 to the host Golgi apparatus. In turn, downstream partner IRF3 cannot be activated and IFN-beta production is impaired. Its function is as follows. Facilitates viral particle release either by increasing plasma membrane permeability through a viroporin-like activity or by viral budding. This is Non-structural protein P8 (Segment-10) from Bluetongue virus 1 (isolate Australia) (BTV 1).